The sequence spans 284 residues: Polyamine aminopropyltransferase (284 aa).

The PABS domain maps to 4-238 (EVWNTERLHD…GPMALGWGSH (235 aa)). Gln33 contributes to the S-methyl-5'-thioadenosine binding site. Spermidine-binding residues include His64 and Asp88. Residues Glu108 and 140 to 141 (DG) each bind S-methyl-5'-thioadenosine. Catalysis depends on Asp158, which acts as the Proton acceptor. 158–161 (DSTD) provides a ligand contact to spermidine. An S-methyl-5'-thioadenosine-binding site is contributed by Pro165.

It belongs to the spermidine/spermine synthase family. As to quaternary structure, homodimer or homotetramer.

Its subcellular location is the cytoplasm. It carries out the reaction S-adenosyl 3-(methylsulfanyl)propylamine + putrescine = S-methyl-5'-thioadenosine + spermidine + H(+). It functions in the pathway amine and polyamine biosynthesis; spermidine biosynthesis; spermidine from putrescine: step 1/1. Catalyzes the irreversible transfer of a propylamine group from the amino donor S-adenosylmethioninamine (decarboxy-AdoMet) to putrescine (1,4-diaminobutane) to yield spermidine. The protein is Polyamine aminopropyltransferase of Ruegeria sp. (strain TM1040) (Silicibacter sp.).